The chain runs to 309 residues: Acetylglutamate kinase (309 aa).

Substrate-binding positions include 69–70 (GG), arginine 91, and asparagine 194.

The protein belongs to the acetylglutamate kinase family. ArgB subfamily.

It is found in the cytoplasm. The enzyme catalyses N-acetyl-L-glutamate + ATP = N-acetyl-L-glutamyl 5-phosphate + ADP. It functions in the pathway amino-acid biosynthesis; L-arginine biosynthesis; N(2)-acetyl-L-ornithine from L-glutamate: step 2/4. Catalyzes the ATP-dependent phosphorylation of N-acetyl-L-glutamate. In Vesicomyosocius okutanii subsp. Calyptogena okutanii (strain HA), this protein is Acetylglutamate kinase.